The primary structure comprises 372 residues: Cytochrome b (372 aa).

4 helical membrane passes run 25–45, 69–90, 105–125, and 170–190; these read FGSMLLTCSALQIMTGFFLSM, WMMQNLHAIGASMFFICVYIHV, WLSGTTLLIMLMATAFFGYVL, and FFALHFILPFGIISLSSLHIM. Heme b-binding residues include H75 and H89. Heme b contacts are provided by H174 and H188. H193 lines the a ubiquinone pocket. The next 4 membrane-spanning stretches (helical) occupy residues 218 to 238, 280 to 300, 312 to 332, and 339 to 358; these read YKDLFMISSMIMIMLLTISFI, LGGALALAMSIMILLTVPFTH, FMQLMFWTLVATFMIITWTAT, and YTMISQVTSSLYFMFFMSNP.

The protein belongs to the cytochrome b family. As to quaternary structure, the cytochrome bc1 complex contains 3 respiratory subunits (MT-CYB, CYC1 and UQCRFS1), 2 core proteins (UQCRC1 and UQCRC2) and probably 6 low-molecular weight proteins. Heme b is required as a cofactor.

The protein resides in the mitochondrion inner membrane. Its function is as follows. Component of the ubiquinol-cytochrome c reductase complex (complex III or cytochrome b-c1 complex) that is part of the mitochondrial respiratory chain. The b-c1 complex mediates electron transfer from ubiquinol to cytochrome c. Contributes to the generation of a proton gradient across the mitochondrial membrane that is then used for ATP synthesis. The polypeptide is Cytochrome b (MT-CYB) (Acrantophis madagascariensis (Madagascar ground boa)).